Reading from the N-terminus, the 485-residue chain is UDP-N-acetylmuramate--L-alanine ligase (485 aa).

129 to 135 is a binding site for ATP; it reads GTHGKTT.

The protein belongs to the MurCDEF family.

The protein localises to the cytoplasm. The enzyme catalyses UDP-N-acetyl-alpha-D-muramate + L-alanine + ATP = UDP-N-acetyl-alpha-D-muramoyl-L-alanine + ADP + phosphate + H(+). The protein operates within cell wall biogenesis; peptidoglycan biosynthesis. Functionally, cell wall formation. The polypeptide is UDP-N-acetylmuramate--L-alanine ligase (Vibrio parahaemolyticus serotype O3:K6 (strain RIMD 2210633)).